The chain runs to 189 residues: Thermostable direct hemolysin-related (189 aa).

Residues 1 to 24 form the signal peptide; the sequence is MKYRYFAKKSFLFISMLAAFKTFA. A disulfide bond links Cys-175 and Cys-185.

This sequence belongs to the TDH hemolysin family. In terms of assembly, homodimer.

Functionally, bacterial hemolysins are exotoxins that attack blood cell membranes and cause cell rupture by mechanisms not clearly defined. The protein is Thermostable direct hemolysin-related (tdh3) of Vibrio parahaemolyticus.